A 381-amino-acid chain; its full sequence is Putative heat shock protein HSP 90-beta 2 (381 aa).

ATP contacts are provided by N46, D88, and K107. The segment covering 145 to 174 has biased composition (basic and acidic residues); sequence KEISDGKAEEEKGEKEEENKDDEEKPKIED. Residues 145–192 form a disordered region; that stretch reads KEISDGKAEEEKGEKEEENKDDEEKPKIEDVGSDEEDDSGKDKKKKTK. Position 177 is a phosphoserine (S177). Residues 315-347 are a coiled coil; the sequence is ELPEDGEEKKRMEERKAKFENLCKFMKETLDKK.

It belongs to the heat shock protein 90 family. Homodimer.

Its subcellular location is the cytoplasm. In terms of biological role, putative molecular chaperone that may promote the maturation, structural maintenance and proper regulation of specific target proteins. This chain is Putative heat shock protein HSP 90-beta 2 (HSP90AB2P), found in Homo sapiens (Human).